The following is a 175-amino-acid chain: Pathogenesis-related protein 1A1 (175 aa).

Residues 1 to 21 (MKSSIFVACFITFIIFHSSQA) form the signal peptide. The SCP domain maps to 29–146 (LNAHNAARRR…SGWVFITCNY (118 aa)). Cystine bridges form between C65/C135, C108/C114, and C130/C144.

Belongs to the CRISP family.

Functionally, probably involved in the defense reaction of plants against pathogens. This is Pathogenesis-related protein 1A1 from Solanum lycopersicum (Tomato).